A 226-amino-acid polypeptide reads, in one-letter code: Transcriptional activator plp-1 (226 aa).

This sequence belongs to the PUR DNA-binding protein family.

It localises to the nucleus. It is found in the chromosome. In terms of biological role, probable transcription activator. Binds telomeric DNA containing repeats of the sequence, 5'-TTAGGC-3'. Binds to end-1 promoter, activating end-1 expression, which is required for endoderm specification during embryonic development. The sequence is that of Transcriptional activator plp-1 from Caenorhabditis elegans.